The sequence spans 657 residues: Single-minded homolog 2 (657 aa).

A bHLH domain is found at 1-53 (MKEKSKNAAKTRREKENGEFYELAKLLPLPSAITSQLDKASIIRLTTSYLKMR). 2 PAS domains span residues 77 to 147 (AKEL…PPLH) and 218 to 288 (PPSA…LVKG). Residues 218–288 (PPSAITEIKL…YAHHLLLVKG (71 aa)) form the PAC domain. Residues 336-657 (EYKELQLSLD…GASVIITNGR (322 aa)) form the Single-minded C-terminal domain. Positions 354–364 (ESWRTTLSTSQ) are enriched in polar residues. Disordered stretches follow at residues 354–387 (ESWRTTLSTSQETRKSAKPKNTKMKTKLRTNPYP) and 612–641 (LGSAAPGAPEAAGSLRPRHPGPVAASAPGA). A Nuclear localization signal motif is present at residues 367–386 (RKSAKPKNTKMKTKLRTNPY). The span at 369-381 (SAKPKNTKMKTKL) shows a compositional bias: basic residues.

As to quaternary structure, efficient DNA binding requires dimerization with another bHLH protein. Heterodimer of SIM2 and ARNT. As to expression, transcripts were detected in high levels in kidney followed by skeletal muscle and lung. Low levels were found in testis, brain and heart. In early fetal development it is found in CNS, developing kidney, tongue epithelium and cartilage primordia.

It localises to the nucleus. In terms of biological role, transcription factor that may be a master gene of CNS development in cooperation with Arnt. It may have pleiotropic effects in the tissues expressed during development. This is Single-minded homolog 2 (Sim2) from Mus musculus (Mouse).